A 336-amino-acid polypeptide reads, in one-letter code: Vomeronasal type-1 receptor 102 (336 aa).

Residues 1 to 42 (MVGVQICQGMTSEILFFSLQPQFSNMMNKNSRLHIDSNIRNT) are Extracellular-facing. The chain crosses the membrane as a helical span at residues 43-63 (FFTEIGIGVSANSLLLLFNIF). Residues 64 to 75 (KFIHGQRSRLTD) lie on the Cytoplasmic side of the membrane. Residues 76-96 (LPIGLLSLINLLMLLIMACIA) traverse the membrane as a helical segment. The Extracellular portion of the chain corresponds to 97 to 120 (TDIFISCRRWDDIICKSLLYLYRT). Cysteines 111 and 198 form a disulfide. Residues 121–140 (FRGLSLSTTCLLSVLQAIIL) form a helical membrane-spanning segment. Over 141-157 (SPRSSCLAKYKHKPPHH) the chain is Cytoplasmic. Residues 158-178 (IFCAMLFLSVLYMFISSHLLL) form a helical membrane-spanning segment. Over 179–213 (SIIATPNLTTNDFIHVSQSCSILPMSYLMQSMFST) the chain is Extracellular. N185 carries N-linked (GlcNAc...) asparagine glycosylation. A helical transmembrane segment spans residues 214–234 (LLAIRNVFLISLIVLSTWYMV). The Cytoplasmic portion of the chain corresponds to 235-264 (ALLCRHRKQTRHLQDTSLSRKASPEQRATR). The helical transmembrane segment at 265-285 (SILMLRSLFVLMSIFDSIVSC) threads the bilayer. The Extracellular segment spans residues 286–296 (SRTMYLNDPTS). Residues 297 to 317 (YSIQLLVVHIYATVSPFVFMI) form a helical membrane-spanning segment. Over 318–336 (TEKHIVNYLKSMYVRVLNV) the chain is Cytoplasmic.

This sequence belongs to the G-protein coupled receptor 1 family. As to expression, expressed in 1-4% of neurons of the vomeronasal organ. Only one pheromone receptor gene may be expressed in a particular neuron. Not expressed in the main olfactory epithelium.

Its subcellular location is the cell membrane. In terms of biological role, putative pheromone receptor implicated in the regulation of social as well as reproductive behavior. The polypeptide is Vomeronasal type-1 receptor 102 (Vom1r102) (Rattus norvegicus (Rat)).